The chain runs to 93 residues: Allatostatin C (93 aa).

Positions 1 to 23 (MSSVRNIAALALVLLVLAEWSAA) are cleaved as a signal peptide. Positions 24–61 (MPTTDKDKERLLNTVDLIDDDGSIETALINYLFTKQIV) are excised as a propeptide. Cysteines 83 and 90 form a disulfide.

It is found in the secreted. Functionally, inhibits juvenile hormone biosynthesis. This is Allatostatin C from Camponotus floridanus (Florida carpenter ant).